We begin with the raw amino-acid sequence, 393 residues long: Endoplasmic reticulum junction formation protein lunapark-A (393 aa).

The Cytoplasmic portion of the chain corresponds to 1 to 45 (MGAVVSRWRAKPSTVEVLEGLDKDIQVLEEYREKNHKQLKLWVYR). The helical transmembrane segment at 46–66 (LLLYSALLYLMACAVVYAWYI) threads the bilayer. Over 67–69 (PER) the chain is Lumenal. Residues 70 to 90 (MIGKLIVASPFLLFPLLIWLL) form a helical membrane-spanning segment. The Cytoplasmic segment spans residues 91-393 (RKLLIILYNK…EQDVSAMEVE (303 aa)). Positions 95-130 (IILYNKRTERNNEKLEELKAEKKKILEQVMETETYK) form a coiled coil. A disordered region spans residues 146–209 (KLELETQPIG…PPEKGLSAST (64 aa)). A compositionally biased stretch (pro residues) spans 176–190 (TGRPPPVPVPGPSVP). The segment at 269 to 294 (CQQCLSHNGMALKEEFEYIAFRCAYC) adopts a C4-type; plays a role in ER morphology zinc-finger fold. A disordered region spans residues 314-393 (AAEAKTSQDP…EQDVSAMEVE (80 aa)). Composition is skewed to basic and acidic residues over residues 340 to 353 (ESKE…KAGD) and 364 to 383 (EEMK…KSDG).

It belongs to the lunapark family. As to quaternary structure, homodimer; homodimerization requires the C4-type zinc finger motif and decreases during mitosis in a phosphorylation-dependent manner. In terms of processing, phosphorylated. Phosphorylation occurs during interphase. Phosphorylation also occurs during mitosis; these phosphorylations reduce both its homodimerization and the ER three-way tubular junction formation.

The protein localises to the endoplasmic reticulum membrane. Functionally, endoplasmic reticulum (ER)-shaping membrane protein that plays a role in determining ER morphology. Involved in the stabilization of nascent three-way ER tubular junctions within the ER network. May also play a role as a curvature-stabilizing protein within three-way ER tubular junction network. In Danio rerio (Zebrafish), this protein is Endoplasmic reticulum junction formation protein lunapark-A (lnpka).